The chain runs to 363 residues: MKESVIRKLEGLLERNEEVMALLGDASVISDQDRFRALSKEYAQLEDVVAGFKAYQQAQVDLDSAKEMLEEDDAEMREMAQEEMKAAKAKLEHLEDELQILLLPKDPDDDKNAFVEIRAGAGGDEAAIFAGDLFRMYSRYAEANRWQIEIMSCNEGEHGGFKEVIMKVSGDGVYGKLKFESGGHRVQRVPETESQGRVHTSAVTVVVLHEVPEAEAISINPADLKVDTFRSSGAGGQHVNKTDSAIRITHIPTGIVVECQDQRSQHKNRAQAMSVLAARIQAVEDEKRRSAEESTRRSLVASGDRSERVRTYNFPQGRVSEHRINLTLYRLNEVMEGDLDAILLPLMQEHQADQLAALADEQG.

Residue Gln237 is modified to N5-methylglutamine. The span at 284–296 shows a compositional bias: basic and acidic residues; that stretch reads EDEKRRSAEESTR. Residues 284-305 form a disordered region; that stretch reads EDEKRRSAEESTRRSLVASGDR.

It belongs to the prokaryotic/mitochondrial release factor family. Methylated by PrmC. Methylation increases the termination efficiency of RF1.

Its subcellular location is the cytoplasm. Peptide chain release factor 1 directs the termination of translation in response to the peptide chain termination codons UAG and UAA. This chain is Peptide chain release factor 1, found in Shewanella baltica (strain OS195).